A 158-amino-acid polypeptide reads, in one-letter code: NAD(P)H-quinone oxidoreductase subunit N (158 aa).

It belongs to the complex I NdhN subunit family. In terms of assembly, NDH-1 can be composed of about 15 different subunits; different subcomplexes with different compositions have been identified which probably have different functions.

Its subcellular location is the cellular thylakoid membrane. The enzyme catalyses a plastoquinone + NADH + (n+1) H(+)(in) = a plastoquinol + NAD(+) + n H(+)(out). The catalysed reaction is a plastoquinone + NADPH + (n+1) H(+)(in) = a plastoquinol + NADP(+) + n H(+)(out). In terms of biological role, NDH-1 shuttles electrons from an unknown electron donor, via FMN and iron-sulfur (Fe-S) centers, to quinones in the respiratory and/or the photosynthetic chain. The immediate electron acceptor for the enzyme in this species is believed to be plastoquinone. Couples the redox reaction to proton translocation, and thus conserves the redox energy in a proton gradient. Cyanobacterial NDH-1 also plays a role in inorganic carbon-concentration. This is NAD(P)H-quinone oxidoreductase subunit N from Microcystis aeruginosa (strain NIES-843 / IAM M-2473).